A 156-amino-acid polypeptide reads, in one-letter code: Cell division protein SepF (156 aa).

Basic and acidic residues predominate over residues 23 to 36 (SYEKEQTDMKKQQD). The interval 23–50 (SYEKEQTDMKKQQDPPEQQDVTFPKAQP) is disordered.

This sequence belongs to the SepF family. In terms of assembly, homodimer. Interacts with FtsZ.

It is found in the cytoplasm. Its function is as follows. Cell division protein that is part of the divisome complex and is recruited early to the Z-ring. Probably stimulates Z-ring formation, perhaps through the cross-linking of FtsZ protofilaments. Its function overlaps with FtsA. The protein is Cell division protein SepF of Bacillus thuringiensis (strain Al Hakam).